We begin with the raw amino-acid sequence, 226 residues long: NADH-ubiquinone oxidoreductase 19.3 kDa subunit, mitochondrial (226 aa).

The tract at residues 40 to 68 (ATGAVAPAGAQHGIARRERREVPLPSQEG) is disordered. [4Fe-4S] cluster is bound by residues cysteine 101, cysteine 102, cysteine 166, and cysteine 196.

The protein belongs to the complex I 20 kDa subunit family. In terms of assembly, complex I is composed of about 40 different subunits. This is a component of the iron-sulfur (IP) fragment of the enzyme. The cofactor is [4Fe-4S] cluster.

It localises to the mitochondrion. It carries out the reaction a ubiquinone + NADH + 5 H(+)(in) = a ubiquinol + NAD(+) + 4 H(+)(out). Core subunit of the mitochondrial membrane respiratory chain NADH dehydrogenase (Complex I) that is believed to belong to the minimal assembly required for catalysis. Complex I functions in the transfer of electrons from NADH to the respiratory chain. The immediate electron acceptor for the enzyme is believed to be ubiquinone. This chain is NADH-ubiquinone oxidoreductase 19.3 kDa subunit, mitochondrial, found in Neurospora crassa (strain ATCC 24698 / 74-OR23-1A / CBS 708.71 / DSM 1257 / FGSC 987).